The sequence spans 685 residues: Linoleate 9/13-lipoxygenase (685 aa).

Residues 1–19 (MKRRSVLLSGVALSGTALA) form the signal peptide. A Lipoxygenase domain is found at 122–685 (ASLPASAAAQ…PSRIPASTNI (564 aa)). The Fe cation site is built by His-377, His-382, His-555, Asn-559, and Ile-685.

It belongs to the lipoxygenase family. As to quaternary structure, monomer. It depends on Fe cation as a cofactor.

The protein resides in the periplasm. The catalysed reaction is (9Z,12Z)-octadecadienoate + O2 = (9S)-hydroperoxy-(10E,12Z)-octadecadienoate. It carries out the reaction (9Z)-octadecenoate + O2 = (8E,10S)-10-hydroperoxy-octadeca-8-enoate. The enzyme catalyses (9Z,12Z)-octadecadienoate + O2 = (8E,10S,12Z)-10-hydroperoxyoctadeca-8,12-dienoate. It catalyses the reaction (9Z,12Z,15Z)-octadecatrienoate + O2 = (8E,10S,12Z,15Z)-10-hydroperoxyoctadeca-8,12,15-trienoate. The catalysed reaction is (9Z,12Z)-octadecadienoate + O2 = (13S)-hydroperoxy-(9Z,11E)-octadecadienoate. It carries out the reaction (9Z,12Z,15Z)-octadecatrienoate + O2 = (13S)-hydroperoxy-(9Z,11E,15Z)-octadecatrienoate. Its activity is regulated as follows. Inhibited by Ba(2+), Zn(2+) and Fe(3+). Functionally, in presence of oxygen, converts linoleate into (9S)-hydroperoxy-10,12-octadecenoate (9HPOD), which spontaneously decomposes to the corresponding 9-hydroxy-10,12-octadecenoate (9HOD), and into 13-hydroperoxy-9,11-octadecenoate (13HPOD) which spontaneously decomposes to the corresponding 13-hydroxy-9,11-octadecenoate (13HOD). Also active on linolenate. To a lesser extent, is also able to convert oleate into (10S)-hydroperoxy-8E-octadecenoate, which spontaneously decomposes to the corresponding 10-hydroxy-8E-octadecenoate. Is almost not active on arachidonate. This chain is Linoleate 9/13-lipoxygenase (lox), found in Pseudomonas aeruginosa.